We begin with the raw amino-acid sequence, 609 residues long: Vanadium chloroperoxidase (609 aa).

K353, R360, S402, G403, H404, R490, and H496 together coordinate vanadate. Catalysis depends on H404, which acts as the Proton donor. Residues 569 to 609 (KPTPPEIQPMPQETPVQKPVGQQPVKGMWEEEQAPVVKEAP) form a disordered region.

It belongs to the vanadium-dependent haloperoxidase family. Homotetramer. It depends on vanadate as a cofactor. The N-terminus is blocked.

The protein localises to the secreted. It carries out the reaction RH + Cl(-) + H2O2 = RCl + 2 H2O.. In terms of biological role, catalyzes the oxidation of chloride in the presence of hydrogen peroxide to hypochlorous acid (ClOH), which in turn can react with a nucleophilic acceptor (RH), to form a chlorinated compound. The protein is Vanadium chloroperoxidase (CPO) of Curvularia inaequalis (Helminthosporium inaequale).